The following is a 471-amino-acid chain: Thiohydroximate-O-sulfate sulfur/sulfate-lyase (nitrile-forming) NSP2 (471 aa).

The 143-residue stretch at 2–144 (VQKVEARGGE…LHSLGAYISS (143 aa)) folds into the Jacalin-type lectin domain. 6 Kelch repeats span residues 178–226 (KIFS…VRMV), 231–277 (SLYV…SMTA), 281–330 (NVYV…VVQG), 332–379 (VWVV…VVGK), 381–435 (ILVF…GWSA), and 446–471 (GLVM…VDSA). Arg-238 serves as the catalytic Proton donor. A (Z)-N-(sulfonatooxy)alkanimidothioate contacts are provided by Arg-238, Ser-271, Arg-293, Gly-322, and Val-371. Residue Arg-293 is the Proton donor of the active site. Residues Glu-387, Asp-391, and His-395 each contribute to the Fe(2+) site. Residue Trp-433 participates in a (Z)-N-(sulfonatooxy)alkanimidothioate binding.

The protein belongs to the jacalin lectin family. It depends on Fe(2+) as a cofactor. Expressed only in seeds.

The enzyme catalyses a (Z)-N-(sulfonatooxy)alkanimidothioate = a nitrile + sulfur + sulfate. The catalysed reaction is (Z)-phenyl-N-(sulfonatooxy)methanimidothioate = phenylacetonitrile + sulfur + sulfate. It carries out the reaction (Z)-N-(sulfonatooxy)prop-2-enimidothioate = but-3-enenitrile + sulfur + sulfate. It catalyses the reaction (Z)-(indol-3-yl)-N-(sulfonatooxy)methanimidothioate = (indol-3-yl)acetonitrile + sulfur + sulfate. With respect to regulation, the presence of Fe(2+) supports lyase activity in a dose-dependent manner with both benzylglucosinolate and 2-propenylglucosinolate as substrates. More active at pH 7.4 than at pH 6. Functionally, specifier protein responsible for constitutive and herbivore-induced simple nitrile formation, especially in seeds. Promotes simple nitriles, but not epithionitrile or thiocyanate formation. Converts allylglucosinolate (allyl-GSL), 2-propenylglucosinolate (sinigrin), indol-3-ylmethylglucosinolate (glucobrassicin), benzylisothiocyanate and benzylglucosinolate (glucotropaeolin) to their corresponding simple nitriles in the presence of myrosinase. Catalyzes mainly the conversion of benzylisothiocyanate when benzylglucosinolate is used as the initial substrate of myrosinase. Involved in the regulation of glucosinolate content in seeds, during stratification and germination. This is Thiohydroximate-O-sulfate sulfur/sulfate-lyase (nitrile-forming) NSP2 from Arabidopsis thaliana (Mouse-ear cress).